The sequence spans 221 residues: Transmembrane emp24 domain-containing protein 3 (221 aa).

Residues 1–25 (MVHEAPHASSFQMLLQLLLLLLLRA) form the signal peptide. Residues 28–184 (LRSAELTFEL…RAEDLNSRVS (157 aa)) lie on the Lumenal side of the membrane. A GOLD domain is found at 42–124 (KQCFHEEVEQ…HKTVYFDFQV (83 aa)). At arginine 103 the chain carries Dimethylated arginine. Residues 185–205 (YWSVGETIALFVVSFSQVLLL) form a helical membrane-spanning segment. Residues 206-221 (KSFFTEKRPVNRAVHS) are Cytoplasmic-facing. The COPII vesicle coat-binding motif lies at 208 to 209 (FF). A COPI vesicle coat-binding motif is present at residues 208-221 (FFTEKRPVNRAVHS).

The protein belongs to the EMP24/GP25L family. As to quaternary structure, monomer in endoplasmic reticulum, endoplasmic reticulum-Golgi intermediate compartment and cis-Golgi network. Interacts (via C-terminus) with COPG1; the interaction involves dimeric TMED3; however, there are conflicting reports on the interaction. Interacts with GORASP1 and GORASP2.

The protein resides in the endoplasmic reticulum-Golgi intermediate compartment membrane. It localises to the golgi apparatus. Its subcellular location is the cis-Golgi network membrane. It is found in the golgi stack membrane. The protein localises to the endoplasmic reticulum membrane. The protein resides in the cytoplasmic vesicle. It localises to the COPI-coated vesicle membrane. In terms of biological role, potential role in vesicular protein trafficking, mainly in the early secretory pathway. Contributes to the coupled localization of TMED2 and TMED10 in the cis-Golgi network. This chain is Transmembrane emp24 domain-containing protein 3 (Tmed3), found in Mus musculus (Mouse).